Here is a 152-residue protein sequence, read N- to C-terminus: Small ribosomal subunit protein uS11B (152 aa).

Residues 131-152 are disordered; the sequence is EDVTPIPSDSTRRKGGRRGRRL. The segment covering 143-152 has biased composition (basic residues); sequence RKGGRRGRRL.

It belongs to the universal ribosomal protein uS11 family.

This chain is Small ribosomal subunit protein uS11B, found in Anopheles gambiae (African malaria mosquito).